Here is a 32-residue protein sequence, read N- to C-terminus: Seminal plasma protein PDC-109 (32 aa).

The segment at aspartate 1 to asparagine 32 is disordered. Threonine 11 is a glycosylation site (O-linked (GalNAc...) threonine). The 14-residue stretch at histidine 19–asparagine 32 folds into the Fibronectin type-II domain.

It belongs to the seminal plasma protein family. In terms of assembly, homodimer.

The protein localises to the secreted. Could enhance the fertilizing capacity of bull spermatozoa upon interaction with heparin-like glycosaminoglycans present in the female genital tract. Exhibits both simulatory and inhibitory actions on the release of pituitary gonadotropins. Binds to heparin and gelatin. In Bos indicus (Zebu), this protein is Seminal plasma protein PDC-109.